A 42-amino-acid polypeptide reads, in one-letter code: Lanthionine-containing peptide SapB precursor RamS (42 aa).

The propeptide occupies 1-21; sequence MNLFDLQSMETPKEEAMGDVE. The segment at 1 to 21 is disordered; it reads MNLFDLQSMETPKEEAMGDVE. 2 cross-links (lanthionine (Ser-Cys)) span residues 24–31 and 34–41; these read SRASLLLC and SSLSITTC. A 2,3-didehydroalanine (Ser) mark is found at S27 and S37.

The protein belongs to the lanthionine-containing morphogen family. Maturation involves the enzymatic conversion of Ser into dehydrated AA and the formation of thioether bonds with cysteine, probably by RamC. This is followed by membrane translocation and cleavage of the modified precursor. The RamS precursor protein (detected by an anti-propeptide antibody and by a C-terminal His-tag) is detected from at least 16 hours post-germination; its apparent molecular weight decreases starting from about 34 hours, when its probable modifying enzyme ramC is transcribed. Surfactin, a B.subtilis cyclic lipopeptide antibiotic which prevents aerial hyphae formation in S.coelicolor, decreases localization of RamS precursor protein to the cell membrane, suggesting that processing only occurs at the cell membrane.

The protein resides in the cell membrane. It is found in the secreted. It localises to the spore wall. In terms of biological role, stably accumulated precursor of SapB. Lanthionine-containing peptide devoid of antibiotic properties. A surface active peptide involved in the efficient formation of aerial mycelium when cells are grown in rich media. Has an overlapping function with the surface-active chaplin proteins; chaplins are essential on minimal medium while on rich medium both chaplins and SapB are required for efficient aerial hyphae formation. Required under conditions of high osmolarity where it may change the physical properties of the chaplin layer to allow hyphae to grow into air. Suggested to self-assemble at air-water interfaces, thus providing a film of surfactant through which nascent aerial hyphae can emerge; the aerial hyphae differentiate further into spores. Application to bald mutants (bld, unable to make aerial hyphae) restores hyphae growth. Application to chaplin negative mutants as well as ramC-ramS-ramA-ramB and ramR deletions also restores aerial hyphae growth and sporulation. Reduces surface tension of water from 72 to 30 mJ/m(2). In Streptomyces coelicolor (strain ATCC BAA-471 / A3(2) / M145), this protein is Lanthionine-containing peptide SapB precursor RamS (ramS).